A 1003-amino-acid chain; its full sequence is Helicase-like transcription factor (1003 aa).

Residue arginine 27 is modified to Omega-N-methylarginine. A DNA-binding region spans residues 38–287; the sequence is EFQDIIPPDD…FSVKERPENV (250 aa). Lysine 112 is covalently cross-linked (Glycyl lysine isopeptide (Lys-Gly) (interchain with G-Cter in SUMO2)). Position 195 is a phosphotyrosine; by JAK2 (tyrosine 195). Lysine 211 is covalently cross-linked (Glycyl lysine isopeptide (Lys-Gly) (interchain with G-Cter in SUMO2)). Position 294–301 (294–301) interacts with ATP; sequence DDMGLGKT. Positions 317–373 are disordered; that stretch reads PLLSKRGKKNHPGKEYKDETIKRRGSNMDKKEDGHSESSTCGEEPSISGTPEKSSCT. Over residues 328–352 the composition is skewed to basic and acidic residues; it reads PGKEYKDETIKRRGSNMDKKEDGHS. Over residues 353-373 the composition is skewed to polar residues; the sequence is ESSTCGEEPSISGTPEKSSCT. Phosphoserine occurs at positions 394, 395, and 397. In terms of domain architecture, Helicase ATP-binding spans 433–600; that stretch reads DSKFALTFFA…WSLLSFLKLK (168 aa). The short motif at 551–554 is the DEGH box element; the sequence is DEGH. Residue threonine 730 is modified to Phosphothreonine. Residues 754–795 form an RING-type zinc finger; it reads CAICLDSLTFPVITHCAHVFCKPCICQVIHSEQPHAKCPLCR. In terms of domain architecture, Helicase C-terminal spans 831-990; sequence ALMHALIELR…TKKTDANDMK (160 aa). Residues 919–1003 are interaction with SP1 and SP3; sequence SRVFLMDPAW…INEIRTLIDL (85 aa).

This sequence belongs to the SNF2/RAD54 helicase family. RAD16 subfamily. In terms of assembly, interacts with SP1 and SP3 independently of DNA; the interaction with these transcriptional factors may be required for basal transcription of target genes. Interacts with EGR1; the interaction requires prior binding to DNA and represses c-Rel via a DNA looping mechanism. Interacts with GATA4. Interacts with PCNA; the interaction promotes polyubiquitination of PCNA through association with the UBE2B-RAD18 and UBE2V2-UBE2N ubiquitin ligase complexes. Interacts with RAD18, SHPRH, UBE2V2 and UBE2N. In terms of tissue distribution, expressed in brain, heart, kidney, liver, lung, pancreas, placenta and skeletal muscle.

The protein resides in the cytoplasm. It is found in the nucleus. The protein localises to the nucleolus. It localises to the nucleoplasm. It carries out the reaction S-ubiquitinyl-[E2 ubiquitin-conjugating enzyme]-L-cysteine + [acceptor protein]-L-lysine = [E2 ubiquitin-conjugating enzyme]-L-cysteine + N(6)-ubiquitinyl-[acceptor protein]-L-lysine.. It participates in protein modification; protein ubiquitination. Has both helicase and E3 ubiquitin ligase activities. Possesses intrinsic ATP-dependent nucleosome-remodeling activity. This activity may be required for transcriptional activation or repression of specific target promoters. These may include the SERPINE1, to which this protein can bind directly. Plays a role in error-free postreplication repair (PRR) of damaged DNA and maintains genomic stability through acting as a ubiquitin ligase for 'Lys-63'-linked polyubiquitination of chromatin-bound PCNA. In Mus musculus (Mouse), this protein is Helicase-like transcription factor (Hltf).